The chain runs to 834 residues: DNA-directed RNA polymerase subunit beta' (834 aa).

Zn(2+)-binding residues include cysteine 88, cysteine 90, cysteine 104, and cysteine 107. Mg(2+) is bound by residues aspartate 641, aspartate 643, and aspartate 645.

It belongs to the RNA polymerase beta' chain family. RpoC1 subfamily. In terms of assembly, in plastids the minimal PEP RNA polymerase catalytic core is composed of four subunits: alpha, beta, beta', and beta''. When a (nuclear-encoded) sigma factor is associated with the core the holoenzyme is formed, which can initiate transcription. It depends on Mg(2+) as a cofactor. Requires Zn(2+) as cofactor.

The protein resides in the plastid. It carries out the reaction RNA(n) + a ribonucleoside 5'-triphosphate = RNA(n+1) + diphosphate. Functionally, DNA-dependent RNA polymerase catalyzes the transcription of DNA into RNA using the four ribonucleoside triphosphates as substrates. The polypeptide is DNA-directed RNA polymerase subunit beta' (rpoC1) (Helicosporidium sp. subsp. Simulium jonesii (Green alga)).